We begin with the raw amino-acid sequence, 424 residues long: Hemagglutinin-esterase (424 aa).

The signal sequence occupies residues 1 to 16; that stretch reads MFLLPRFVLVSCIIGS. The segment at 7–127 is esterase domain 1; it reads FVLVSCIIGS…SNDIWMQNKG (121 aa). Residues 17–392 are Virion surface-facing; that stretch reads LGFENPPTNV…PICVYDPLPL (376 aa). S40 acts as the Nucleophile in catalysis. Cysteines 44 and 65 form a disulfide. N54, N89, N153, N236, and N301 each carry an N-linked (GlcNAc...) asparagine; by host glycan. Disulfide bonds link C113–C162, C197–C276, and C205–C249. The receptor binding stretch occupies residues 128 to 266; sequence LFYTQVYKNM…GNYLAISNEL (139 aa). Positions 267-379 are esterase domain 2; that stretch reads LLTVPTKAIC…RCPTAADINT (113 aa). The cysteines at positions 307 and 312 are disulfide-linked. A glycan (N-linked (GlcNAc...) asparagine; by host) is linked at N316. Active-site charge relay system residues include D326 and H329. C347 and C371 are oxidised to a cystine. An N-linked (GlcNAc...) asparagine; by host glycan is attached at N358. Residues 393–413 form a helical membrane-spanning segment; it reads ILLGILLGVAVIIIVVLLLYF. Residues 414–424 are Intravirion-facing; that stretch reads MVDNGTRLHDA. N-linked (GlcNAc...) asparagine; by host glycosylation is present at N417.

This sequence belongs to the influenza type C/coronaviruses hemagglutinin-esterase family. Homodimer; disulfide-linked. Forms a complex with the M protein in the pre-Golgi. Associates then with S-M complex to form a ternary complex S-M-HE. N-glycosylated in the host RER.

Its subcellular location is the virion membrane. The protein localises to the host cell membrane. The catalysed reaction is N-acetyl-9-O-acetylneuraminate + H2O = N-acetylneuraminate + acetate + H(+). The enzyme catalyses N-acetyl-4-O-acetylneuraminate + H2O = N-acetylneuraminate + acetate + H(+). Structural protein that makes short spikes at the surface of the virus. Contains receptor binding and receptor-destroying activities. Mediates de-O-acetylation of N-acetyl-4-O-acetylneuraminic acid, which is probably the receptor determinant recognized by the virus on the surface of erythrocytes and susceptible cells. This receptor-destroying activity is important for virus release as it probably helps preventing self-aggregation and ensures the efficient spread of the progeny virus from cell to cell. May serve as a secondary viral attachment protein for initiating infection, the spike protein being the major one. May become a target for both the humoral and the cellular branches of the immune system. In Bovine coronavirus (strain G95) (BCoV), this protein is Hemagglutinin-esterase.